A 447-amino-acid chain; its full sequence is Argininosuccinate synthase (447 aa).

ATP is bound by residues 17–25 (AFSGGLDTS) and A43. Y99 is a binding site for L-citrulline. Residues G129 and T131 each contribute to the ATP site. Positions 131, 135, and 136 each coordinate L-aspartate. N135 provides a ligand contact to L-citrulline. An ATP-binding site is contributed by D136. Residues R139 and S192 each coordinate L-citrulline. D194 contacts ATP. L-citrulline-binding residues include T201, E203, and E280.

The protein belongs to the argininosuccinate synthase family. Type 2 subfamily. As to quaternary structure, homotetramer.

It localises to the cytoplasm. The catalysed reaction is L-citrulline + L-aspartate + ATP = 2-(N(omega)-L-arginino)succinate + AMP + diphosphate + H(+). It participates in amino-acid biosynthesis; L-arginine biosynthesis; L-arginine from L-ornithine and carbamoyl phosphate: step 2/3. The chain is Argininosuccinate synthase from Klebsiella pneumoniae subsp. pneumoniae (strain ATCC 700721 / MGH 78578).